Here is a 563-residue protein sequence, read N- to C-terminus: Formate--tetrahydrofolate ligase (563 aa).

ATP is bound at residue Thr65–Thr72.

The protein belongs to the formate--tetrahydrofolate ligase family.

It catalyses the reaction (6S)-5,6,7,8-tetrahydrofolate + formate + ATP = (6R)-10-formyltetrahydrofolate + ADP + phosphate. The protein operates within one-carbon metabolism; tetrahydrofolate interconversion. The chain is Formate--tetrahydrofolate ligase from Cutibacterium acnes (strain DSM 16379 / KPA171202) (Propionibacterium acnes).